A 200-amino-acid chain; its full sequence is Holliday junction branch migration complex subunit RuvA (200 aa).

Residues Met1–Ile63 form a domain I region. Residues Asn64–Leu142 form a domain II region. The tract at residues Gln143–Asn149 is flexible linker. Residues Glu150–Ser200 are domain III.

It belongs to the RuvA family. Homotetramer. Forms an RuvA(8)-RuvB(12)-Holliday junction (HJ) complex. HJ DNA is sandwiched between 2 RuvA tetramers; dsDNA enters through RuvA and exits via RuvB. An RuvB hexamer assembles on each DNA strand where it exits the tetramer. Each RuvB hexamer is contacted by two RuvA subunits (via domain III) on 2 adjacent RuvB subunits; this complex drives branch migration. In the full resolvosome a probable DNA-RuvA(4)-RuvB(12)-RuvC(2) complex forms which resolves the HJ.

It localises to the cytoplasm. Functionally, the RuvA-RuvB-RuvC complex processes Holliday junction (HJ) DNA during genetic recombination and DNA repair, while the RuvA-RuvB complex plays an important role in the rescue of blocked DNA replication forks via replication fork reversal (RFR). RuvA specifically binds to HJ cruciform DNA, conferring on it an open structure. The RuvB hexamer acts as an ATP-dependent pump, pulling dsDNA into and through the RuvAB complex. HJ branch migration allows RuvC to scan DNA until it finds its consensus sequence, where it cleaves and resolves the cruciform DNA. The chain is Holliday junction branch migration complex subunit RuvA from Staphylococcus epidermidis (strain ATCC 35984 / DSM 28319 / BCRC 17069 / CCUG 31568 / BM 3577 / RP62A).